A 937-amino-acid polypeptide reads, in one-letter code: Leucine--tRNA ligase (937 aa).

Residues 34–44 carry the 'HIGH' region motif; sequence PYPSGAMHIGH. The short motif at 609-613 is the 'KMSKS' region element; the sequence is KMSSS.

It belongs to the class-I aminoacyl-tRNA synthetase family.

The protein resides in the cytoplasm. The catalysed reaction is tRNA(Leu) + L-leucine + ATP = L-leucyl-tRNA(Leu) + AMP + diphosphate. The polypeptide is Leucine--tRNA ligase (Methanothermobacter thermautotrophicus (strain ATCC 29096 / DSM 1053 / JCM 10044 / NBRC 100330 / Delta H) (Methanobacterium thermoautotrophicum)).